The sequence spans 375 residues: Fluoride export protein 2 (375 aa).

The Cytoplasmic portion of the chain corresponds to Met1–Lys11. A helical transmembrane segment spans residues Leu12–Thr32. At Arg33 to Gln34 the chain is on the extracellular side. A helical membrane pass occupies residues Ala35–Ser55. Residues Asn56–Gln79 lie on the Cytoplasmic side of the membrane. The chain crosses the membrane as a helical span at residues Val80–Leu100. Over Leu101 to Gly127 the chain is Extracellular. N-linked (GlcNAc...) asparagine glycosylation is found at Asn109 and Asn117. Residues Ile128 to Phe148 traverse the membrane as a helical segment. Residues Gly149–Lys213 lie on the Cytoplasmic side of the membrane. The helical transmembrane segment at Leu214–Glu234 threads the bilayer. An N-linked (GlcNAc...) asparagine glycan is attached at Asn235. Over Asn235–Trp241 the chain is Extracellular. The chain crosses the membrane as a helical span at residues Thr242 to Phe262. Over Asn263–Lys268 the chain is Cytoplasmic. A helical membrane pass occupies residues Phe269 to Met289. Over Val290–Cys310 the chain is Extracellular. Residues His311 to Ile331 form a helical membrane-spanning segment. The Cytoplasmic segment spans residues Asn332–Ser338. A helical transmembrane segment spans residues Phe339 to Ile359. Residues Thr360 to Cys375 lie on the Extracellular side of the membrane.

It belongs to the fluoride channel Fluc/FEX (TC 1.A.43) family.

The protein resides in the cell membrane. The enzyme catalyses fluoride(in) = fluoride(out). Fluoride channel required for the rapid expulsion of cytoplasmic fluoride. This is Fluoride export protein 2 from Saccharomyces cerevisiae (strain ATCC 204508 / S288c) (Baker's yeast).